The primary structure comprises 248 residues: 1-(5-phosphoribosyl)-5-[(5-phosphoribosylamino)methylideneamino] imidazole-4-carboxamide isomerase (248 aa).

Asp8 serves as the catalytic Proton acceptor. Asp131 functions as the Proton donor in the catalytic mechanism.

It belongs to the HisA/HisF family.

It localises to the cytoplasm. It catalyses the reaction 1-(5-phospho-beta-D-ribosyl)-5-[(5-phospho-beta-D-ribosylamino)methylideneamino]imidazole-4-carboxamide = 5-[(5-phospho-1-deoxy-D-ribulos-1-ylimino)methylamino]-1-(5-phospho-beta-D-ribosyl)imidazole-4-carboxamide. It participates in amino-acid biosynthesis; L-histidine biosynthesis; L-histidine from 5-phospho-alpha-D-ribose 1-diphosphate: step 4/9. In Cupriavidus pinatubonensis (strain JMP 134 / LMG 1197) (Cupriavidus necator (strain JMP 134)), this protein is 1-(5-phosphoribosyl)-5-[(5-phosphoribosylamino)methylideneamino] imidazole-4-carboxamide isomerase.